The primary structure comprises 193 residues: PXMP2/4 family protein 2 (193 aa).

4 helical membrane-spanning segments follow: residues 56 to 78 (VATM…YRSL), 96 to 116 (IDQL…TNFI), 132 to 152 (LFYA…INFS), and 160 to 180 (VLYS…ISFD).

It belongs to the peroxisomal membrane protein PXMP2/4 family.

The protein localises to the membrane. The polypeptide is PXMP2/4 family protein 2 (Dictyostelium discoideum (Social amoeba)).